The following is a 340-amino-acid chain: Coproporphyrin III ferrochelatase (340 aa).

Ser-52 and Tyr-121 together coordinate Fe-coproporphyrin III. Fe(2+) is bound by residues His-181 and Glu-264.

It belongs to the ferrochelatase family.

It localises to the cytoplasm. The catalysed reaction is Fe-coproporphyrin III + 2 H(+) = coproporphyrin III + Fe(2+). The protein operates within porphyrin-containing compound metabolism; protoheme biosynthesis. Involved in coproporphyrin-dependent heme b biosynthesis. Catalyzes the insertion of ferrous iron into coproporphyrin III to form Fe-coproporphyrin III. In Mycolicibacterium smegmatis (strain ATCC 700084 / mc(2)155) (Mycobacterium smegmatis), this protein is Coproporphyrin III ferrochelatase.